The following is a 103-amino-acid chain: ATP synthase subunit f, mitochondrial (103 aa).

The transit peptide at M1–Q6 directs the protein to the mitochondrion.

F-type ATP synthases have 2 components, the catalytic core F(1) and the membrane-embedded component F(0), linked together by a central stalk and a peripheral stalk. The central stalk, also called rotor shaft, is often seen as part of F(1). The peripheral stalk is seen as part of F(0). F(0) contains the membrane channel next to the rotor. F-type ATP synthases form dimers but each monomer functions independently in ATP generation. The dimer consists of 17 different polypeptides: ATP1 (subunit alpha, 3 molecules per monomer, part of F(1)), ATP2 (subunit beta, 3 copies per monomer, part of F(1)), ATP3 (subunit gamma, part of the central stalk), ATP4 (subunit b, part of the peripheral stalk), ATP5/OSCP (subunit 5/OSCP, part of the peripheral stalk), ATP6 (subunit a, part of the peripheral stalk), ATP7 (subunit d, part of the peripheral stalk), ATP8 (subunit 8, part of the peripheral stalk), OLI1 (subunit c, part of the rotor, 10 molecules per monomer), ATP14 (subunit h, part of the peripheral stalk), ATP15 (subunit epsilon, part of the central stalk), ATP16 (subunit delta, part of the central stalk), ATP17 (subunit f, part of the peripheral stalk), ATP18 (subunit i/j, part of the peripheral stalk), ATP19 (subunit k, dimer-specific, at interface between monomers), ATP20 (subunit g, at interface between monomers), TIM11 (subunit e, at interface between monomers).

Its subcellular location is the mitochondrion inner membrane. Mitochondrial membrane ATP synthase (F(1)F(0) ATP synthase or Complex V) produces ATP from ADP in the presence of a proton gradient across the membrane which is generated by electron transport complexes of the respiratory chain. F-type ATP synthases consist of two structural domains, F(1) - containing the extramembraneous catalytic core, and F(0) - containing the membrane proton channel, linked together by a central stalk and a peripheral stalk. During catalysis, ATP synthesis in the catalytic domain of F(1) is coupled via a rotary mechanism of the central stalk subunits to proton translocation. Part of the complex F(0) domain. Minor subunit located with subunit a/ATP6 in the membrane. This Yarrowia lipolytica (strain CLIB 122 / E 150) (Yeast) protein is ATP synthase subunit f, mitochondrial.